We begin with the raw amino-acid sequence, 215 residues long: Cytochrome b6 (215 aa).

The chain crosses the membrane as a helical span at residues 32 to 52 (IFYCLGGITLTCFLVQVATGF). Cysteine 35 contacts heme c. Heme b-binding residues include histidine 86 and histidine 100. 3 helical membrane-spanning segments follow: residues 90-110 (ASMM…TGGF), 116-136 (LTWV…VTGY), and 186-206 (LHTF…FPMI). The heme b site is built by histidine 187 and histidine 202.

It belongs to the cytochrome b family. PetB subfamily. The 4 large subunits of the cytochrome b6-f complex are cytochrome b6, subunit IV (17 kDa polypeptide, PetD), cytochrome f and the Rieske protein, while the 4 small subunits are PetG, PetL, PetM and PetN. The complex functions as a dimer. The cofactor is heme b. Requires heme c as cofactor.

Its subcellular location is the plastid. The protein localises to the chloroplast thylakoid membrane. Component of the cytochrome b6-f complex, which mediates electron transfer between photosystem II (PSII) and photosystem I (PSI), cyclic electron flow around PSI, and state transitions. The chain is Cytochrome b6 from Populus alba (White poplar).